A 2101-amino-acid chain; its full sequence is General transcription factor 3C polypeptide 1 (2101 aa).

Residues 473–487 show a composition bias toward acidic residues; sequence GEEAFLSDSESEEES. Disordered regions lie at residues 473-574 and 588-609; these read GEEA…MDSH and NPKE…DKPH. The segment covering 492 to 503 has biased composition (basic residues); the sequence is GKRRGRGSRGHA. Residues 504–513 show a composition bias toward low complexity; that stretch reads RASGDAGSGS. Lysine 534 participates in a covalent cross-link: Glycyl lysine isopeptide (Lys-Gly) (interchain with G-Cter in SUMO2). Residue serine 667 is modified to Phosphoserine. Disordered stretches follow at residues 718–772 and 820–864; these read STAN…EKMG and GEQP…SSWE. The span at 747 to 759 shows a compositional bias: polar residues; sequence RSANSDPNTSSKP. Basic and acidic residues-rich tracts occupy residues 760–771 and 826–836; these read ESTRVKKTDEKM and HSERKTGKQES. Residues lysine 770 and lysine 833 each participate in a glycyl lysine isopeptide (Lys-Gly) (interchain with G-Cter in SUMO2) cross-link. Serine 1063 is modified (phosphoserine). Basic and acidic residues predominate over residues 1186–1196; that stretch reads EEQFELDREPT. Disordered stretches follow at residues 1186–1239, 1598–1627, and 1822–1923; these read EEQF…KKLR, KSLG…QGVE, and DTKA…QENQ. Threonine 1196 carries the phosphothreonine modification. The segment covering 1199–1215 has biased composition (basic residues); it reads RNRKVRGGKSQKRKRLK. Basic and acidic residues predominate over residues 1229–1239; the sequence is EHPEAKSKKLR. The segment covering 1606-1617 has biased composition (acidic residues); sequence LDDDEEEEDLDE. Basic and acidic residues predominate over residues 1822 to 1831; sequence DTKASGDDSQ. 2 positions are modified to phosphoserine: serine 1854 and serine 1890. A compositionally biased stretch (low complexity) spans 1900-1910; the sequence is EAQAPAQLAAP.

The protein belongs to the TFIIIC subunit 1 family. In terms of assembly, part of the TFIIIC subcomplex TFIIIC2, consisting of six subunits, GTF3C1, GTF3C2, GTF3C3, GTF3C4, GTF3C5 and GTF3C6. Interacts with IGHMBP2. Interacts with MAF1.

Its subcellular location is the nucleus. In terms of biological role, required for RNA polymerase III-mediated transcription. Component of TFIIIC that initiates transcription complex assembly on tRNA and is required for transcription of 5S rRNA and other stable nuclear and cytoplasmic RNAs. Binds to the box B promoter element. This Mus musculus (Mouse) protein is General transcription factor 3C polypeptide 1 (Gtf3c1).